Consider the following 84-residue polypeptide: Turripeptide IX-03 (84 aa).

An N-terminal signal peptide occupies residues 1–21; it reads MGFYMLLTVALLLTSLMNVEA. Residues 22–39 constitute a propeptide that is removed on maturation; the sequence is TPVDQAERSALEKSGLGN. Intrachain disulfides connect cysteine 48–cysteine 70, cysteine 55–cysteine 74, and cysteine 60–cysteine 81.

As to expression, expressed by the venom duct.

It is found in the secreted. The chain is Turripeptide IX-03 from Gemmula speciosa (Splendid gem-turris).